A 35-amino-acid chain; its full sequence is Defensin-B (35 aa).

3 disulfides stabilise this stretch: cysteine 4–cysteine 25, cysteine 10–cysteine 33, and cysteine 14–cysteine 35.

It localises to the secreted. Its function is as follows. Has antibacterial activity against M.luteus and E.coli. The protein is Defensin-B of Mytilus edulis (Blue mussel).